Consider the following 862-residue polypeptide: MGEVNKDAVEKYLENNPQFAKEYFDRKMRAEVLGSIFQVSPGDVKEGVSFKDMSRLEECNILFELLTEIQDEAGSMEKIVHKTLQRLSQLLARDRCSMFICRSRNGIPEVATRLLNVTPTSKFEDNLVNPDKETVFPLDIGIAGWVAHTKKFFNIPDVKKNNHFSDYLDKKTGYTTVNMMAIPITQGKEVLAVVMALNKLNASEFSKEDEEVFKKYLNFISLVLRNHHTSYLYNIESRRSQMLLWSANKVFEELTDIERQFHKALYTIRMYLNCERYSVGLLDMTKEKEFYDEWPIRLGEAEPYKGPKTPDGREVNFYKIIDYILHGKEEIKVIPTPPADHWCLISGLPTYVAENGFICNMMNAPADEYFTFQKGPVDETGWVIKNVLSLPIVNKKEEIVGVATFYNRKDGKPFDEYDEQIIETLTQFLGWSVLNTDTYDKMNKLENRKDIAQEMLMYQTKATPTEVESILKYKEKLNVKSIEECDEKDLIRILKEELPDPKDLELYEFRFSDFPVTEHGLITCGIRLFFEINVVEKFKVPAEVLTRWMYTVRKGYRDITYHNWRHGFNVGQTMFTLLMTGRIKKYYTDLEAFAMVAAAFCHDIDHRGTNNLYQMKSAAPLAKLHGSSILERHHLEYSKTLLQDESLNIFQNLNKRQFETVLHLFEVAIIATDLALYFKKRTMFQKIVDAIEKMETEEEAIKYISIDPTKKEVIMAMMMTGCDLSAITKPWEVQSKVALMVANEFWEQGDLERTVLQQQPIPMMDRNKGDELPKLQVGFIDFVCTFVYKEFSRFHKEITPMFDGLQNNRVEWKTRADEYEEKMKVIEEQKKKEEEAAAKKAENAAGGGGGGEDGKSKTCIVL.

2 consecutive GAF domains span residues serine 75 to leucine 224 and aspartate 256 to valine 433. 3',5'-cyclic GMP-binding positions include serine 97, asparagine 116, aspartate 169 to threonine 172, and threonine 176. In terms of domain architecture, PDEase spans aspartate 486–tyrosine 819. Histidine 562 functions as the Proton donor in the catalytic mechanism. Residues histidine 566, histidine 602, aspartate 603, and aspartate 723 each coordinate a divalent metal cation. Basic and acidic residues predominate over residues lysine 830 to glutamate 842. The segment at lysine 830 to leucine 862 is disordered. A Cysteine methyl ester modification is found at cysteine 859. Cysteine 859 carries S-geranylgeranyl cysteine lipidation. The propeptide at isoleucine 860–leucine 862 is removed in mature form.

The protein belongs to the cyclic nucleotide phosphodiesterase family. Composed of two alpha' subunits that are associated with 3 smaller proteins of 11, 13, and 15 kDa. The cofactor is a divalent metal cation.

The protein localises to the cell membrane. It catalyses the reaction 3',5'-cyclic GMP + H2O = GMP + H(+). In terms of biological role, as cone-specific cGMP phosphodiesterase, it plays an essential role in light detection and cone phototransduction by rapidly decreasing intracellular levels of cGMP. The chain is Cone cGMP-specific 3',5'-cyclic phosphodiesterase subunit alpha' (PDE6C) from Gallus gallus (Chicken).